Here is a 708-residue protein sequence, read N- to C-terminus: Lactotransferrin (708 aa).

An N-terminal signal peptide occupies residues methionine 1–alanine 19. 2 consecutive Transferrin-like domains span residues valine 25–glutamate 352 and valine 364–glutamine 693. 2 cysteine pairs are disulfide-bonded: cysteine 28–cysteine 64 and cysteine 38–cysteine 55. Aspartate 79 provides a ligand contact to Fe(3+). The active site involves arginine 92. Tyrosine 111 is a binding site for Fe(3+). Cystine bridges form between cysteine 134-cysteine 217, cysteine 176-cysteine 192, cysteine 179-cysteine 202, cysteine 189-cysteine 200, and cysteine 250-cysteine 264. Threonine 136 lines the hydrogencarbonate pocket. An N-linked (GlcNAc...) asparagine glycan is attached at asparagine 139. The hydrogencarbonate site is built by arginine 140, alanine 142, and glycine 143. Tyrosine 211 is a Fe(3+) binding site. Histidine 272 contacts Fe(3+). Residue serine 278 is the Nucleophile of the active site. 2 disulfide bridges follow: cysteine 367–cysteine 399 and cysteine 377–cysteine 390. Asparagine 385 is a glycosylation site (N-linked (GlcNAc...) asparagine). Fe(3+) is bound by residues aspartate 414 and aspartate 452. 4 disulfides stabilise this stretch: cysteine 476/cysteine 551, cysteine 510/cysteine 524, cysteine 521/cysteine 534, and cysteine 592/cysteine 606. Positions 478, 482, 484, and 485 each coordinate hydrogencarbonate. The N-linked (GlcNAc...) asparagine glycan is linked to asparagine 495. Tyrosine 545 contacts Fe(3+). Histidine 614 provides a ligand contact to Fe(3+).

The protein belongs to the transferrin family. Monomer. Found in a complex with LTF, CLU, EPPIN and SEMG1. Interacts with prey activated coagulation factor X; the interaction inhibits coagulation factor X catalytic activity. Found in a complex with MPO and LTF; interacts directly with CP, allows Fe(3+) incorporation into LTF and activation of CP ferroxidase activity. Post-translationally, N-glycosylated. Glycosylation is important for draculin anticoagulant activity. Probably also O-glycosylated. Expressed in the submaxillary gland and secreted in the saliva (at protein level).

Its subcellular location is the secreted. Transferrins are iron binding transport proteins which can bind two Fe(3+) ions in association with the binding of an anion, usually bicarbonate. Its function is as follows. Major iron-binding and multifunctional protein found in exocrine fluids such as breast milk and mucosal secretions. Has antimicrobial activity. Antimicrobial properties may include bacteriostasis, which is related to its ability to sequester free iron and thus inhibit microbial growth, as well as direct bactericidal properties leading to the release of lipopolysaccharides from the bacterial outer membrane. May have anabolic, differentiating and anti-apoptotic effects on osteoblasts and may also inhibit osteoclastogenesis, possibly playing a role in the regulation of bone growth. May interfere with the lipopolysaccharide (LPS)-stimulated TLR4 signaling. In terms of biological role, the lactotransferrin transferrin-like domain 1 functions as a serine protease of the peptidase S60 family that cuts arginine rich regions. This function contributes to the antimicrobial activity. Shows a preferential cleavage at -Arg-Ser-Arg-Arg-|- and -Arg-Arg-Ser-Arg-|-, and of Z-Phe-Arg-|-aminomethylcoumarin sites. Functionally, acts as an anticoagulant of the blood coagulation cascade of the bat's prey by inhibiting coagulation factor IX and activated coagulation factor X. The chain is Lactotransferrin from Desmodus rotundus (Vampire bat).